The sequence spans 352 residues: UDP-N-acetylglucosamine--N-acetylmuramyl-(pentapeptide) pyrophosphoryl-undecaprenol N-acetylglucosamine transferase 2 (352 aa).

Residues 11 to 13, Arg164, Ser194, and Gln289 each bind UDP-N-acetyl-alpha-D-glucosamine; that span reads SAG.

This sequence belongs to the glycosyltransferase 28 family. MurG subfamily.

The protein resides in the cell membrane. It carries out the reaction di-trans,octa-cis-undecaprenyl diphospho-N-acetyl-alpha-D-muramoyl-L-alanyl-D-glutamyl-meso-2,6-diaminopimeloyl-D-alanyl-D-alanine + UDP-N-acetyl-alpha-D-glucosamine = di-trans,octa-cis-undecaprenyl diphospho-[N-acetyl-alpha-D-glucosaminyl-(1-&gt;4)]-N-acetyl-alpha-D-muramoyl-L-alanyl-D-glutamyl-meso-2,6-diaminopimeloyl-D-alanyl-D-alanine + UDP + H(+). The protein operates within cell wall biogenesis; peptidoglycan biosynthesis. In terms of biological role, cell wall formation. Catalyzes the transfer of a GlcNAc subunit on undecaprenyl-pyrophosphoryl-MurNAc-pentapeptide (lipid intermediate I) to form undecaprenyl-pyrophosphoryl-MurNAc-(pentapeptide)GlcNAc (lipid intermediate II). The chain is UDP-N-acetylglucosamine--N-acetylmuramyl-(pentapeptide) pyrophosphoryl-undecaprenol N-acetylglucosamine transferase 2 from Bacillus cereus (strain ATCC 14579 / DSM 31 / CCUG 7414 / JCM 2152 / NBRC 15305 / NCIMB 9373 / NCTC 2599 / NRRL B-3711).